We begin with the raw amino-acid sequence, 396 residues long: Elongation factor Tu (396 aa).

The 196-residue stretch at lysine 10 to valine 205 folds into the tr-type G domain. The interval glycine 19–threonine 26 is G1. Glycine 19–threonine 26 lines the GTP pocket. Residue threonine 26 coordinates Mg(2+). The G2 stretch occupies residues glycine 62–asparagine 66. The segment at aspartate 83 to glycine 86 is G3. GTP-binding positions include aspartate 83–histidine 87 and asparagine 138–aspartate 141. Residues asparagine 138–aspartate 141 form a G4 region. Residues serine 175–leucine 177 are G5.

It belongs to the TRAFAC class translation factor GTPase superfamily. Classic translation factor GTPase family. EF-Tu/EF-1A subfamily. Monomer.

Its subcellular location is the cytoplasm. The enzyme catalyses GTP + H2O = GDP + phosphate + H(+). Functionally, GTP hydrolase that promotes the GTP-dependent binding of aminoacyl-tRNA to the A-site of ribosomes during protein biosynthesis. The sequence is that of Elongation factor Tu from Rhodococcus erythropolis (strain PR4 / NBRC 100887).